Consider the following 621-residue polypeptide: 1,4-alpha-glucan branching enzyme GlgB (621 aa).

The Nucleophile role is filled by Asp302. Glu355 (proton donor) is an active-site residue.

Belongs to the glycosyl hydrolase 13 family. GlgB subfamily. As to quaternary structure, monomer.

It carries out the reaction Transfers a segment of a (1-&gt;4)-alpha-D-glucan chain to a primary hydroxy group in a similar glucan chain.. It functions in the pathway glycan biosynthesis; glycogen biosynthesis. Catalyzes the formation of the alpha-1,6-glucosidic linkages in glycogen by scission of a 1,4-alpha-linked oligosaccharide from growing alpha-1,4-glucan chains and the subsequent attachment of the oligosaccharide to the alpha-1,6 position. The sequence is that of 1,4-alpha-glucan branching enzyme GlgB from Dechloromonas aromatica (strain RCB).